The chain runs to 108 residues: uncharacterized protein (108 aa).

A helical transmembrane segment spans residues 59–81; sequence NIVIILWKIMVVIISSIIHRTYI.

The protein resides in the membrane. This is an uncharacterized protein from Rickettsia conorii (strain ATCC VR-613 / Malish 7).